The chain runs to 331 residues: Eukaryotic translation initiation factor 2 subunit 2 (331 aa).

2 disordered regions span residues 1 to 75 (MSGD…DLNF) and 97 to 120 (AIKD…LDIM). An N-acetylserine modification is found at serine 2. Phosphoserine occurs at positions 2 and 13. Residues 13-22 (SKKKKKKKKP) are compositionally biased toward basic residues. Threonine 36 bears the Phosphothreonine mark. Over residues 40-51 (ETKEVEPEPTEE) the composition is skewed to basic and acidic residues. Phosphoserine is present on serine 67. Lysine 102 is covalently cross-linked (Glycyl lysine isopeptide (Lys-Gly) (interchain with G-Cter in SUMO2)). Serine 105 carries the post-translational modification Phosphoserine. The span at 106 to 118 (DAQEPAEPEDDLD) shows a compositional bias: acidic residues. A phosphoserine mark is found at serine 158 and serine 216. 2 positions are modified to N6-acetyllysine: lysine 263 and lysine 291. Residues 279–303 (CHTCRSPDTILQKDTRLYFLQCETC) form a C4-type zinc finger.

This sequence belongs to the eIF-2-beta/eIF-5 family. Eukaryotic translation initiation factor 2 eIF2 is a heterotrimeric complex composed of an alpha (EIF2S1), a beta (EIF2S2) and a gamma (EIF2S3) chain. eIF2 is member of the 43S pre-initiation complex (43S PIC). eIF2 forms a complex with at least CELF1/CUGBP1, CALR, CALR3, EIF2S1, EIF2S2, HSP90B1 and HSPA5. Interacts with BZW2/5MP1. Interacts with EIF5.

It is found in the cytoplasm. The protein resides in the cytosol. Component of the eIF2 complex that functions in the early steps of protein synthesis by forming a ternary complex with GTP and initiator tRNA. This complex binds to a 40S ribosomal subunit, followed by mRNA binding to form the 43S pre-initiation complex (43S PIC). Junction of the 60S ribosomal subunit to form the 80S initiation complex is preceded by hydrolysis of the GTP bound to eIF2 and release of an eIF2-GDP binary complex. In order for eIF2 to recycle and catalyze another round of initiation, the GDP bound to eIF2 must exchange with GTP by way of a reaction catalyzed by eIF2B. This Mus musculus (Mouse) protein is Eukaryotic translation initiation factor 2 subunit 2 (Eif2s2).